The chain runs to 505 residues: MVKLGQLLASVPEVVAAAPWLAQESDRCPALGKIVTGLSTNSHACPPGTLFIGMPGTRVDGGEFWSGALEAGAIAAVVSEKALQKFPPQNGECVIAVPDLVPVCAGLAAAFYQHPAQTLQLVGVTGTNGKTTTSHLIEYFLNQQQRSSALLGTLYTRWPGYQKTATHTTPFATDLQKQLAEALQAGNQYAVMEVSSHALAQGRVLQCGFACAVFTNLTQDHLDFHGTMENYFAAKALLFKESYLQGRAVINQDDPYGQRLIDRLPLDQVYTYSVNDSTADFYTKDLDYQPTGVKGTFVTPQGEFPFLSPLVGQFNLANVLAAIASGLHLGLDPAAMVKDLLDFPGVPGRMEQVQIRPDQDISVMVDYAHTPDSLENALKAARPFIPGRLICIFGCGGDRDRTKRPLMGNIAAQLADLAVVTSDNPRTEDPEQILADVVQGISLDIEPWIIGDRATAIHKAIREAKPGDGVLIAGKGHEDYQILGTEKIHFDDREQAREALILRYS.

Residue Ser-42 coordinates UDP-N-acetyl-alpha-D-muramoyl-L-alanyl-D-glutamate. 126–132 (GTNGKTT) contributes to the ATP binding site. Residues 168 to 169 (TT), Ser-195, Gln-201, and Arg-203 each bind UDP-N-acetyl-alpha-D-muramoyl-L-alanyl-D-glutamate. Lys-235 carries the N6-carboxylysine modification. Meso-2,6-diaminopimelate is bound by residues Arg-399, 423-426 (DNPR), Gly-474, and Glu-478. A Meso-diaminopimelate recognition motif motif is present at residues 423 to 426 (DNPR).

This sequence belongs to the MurCDEF family. MurE subfamily. It depends on Mg(2+) as a cofactor. In terms of processing, carboxylation is probably crucial for Mg(2+) binding and, consequently, for the gamma-phosphate positioning of ATP.

It localises to the cytoplasm. It carries out the reaction UDP-N-acetyl-alpha-D-muramoyl-L-alanyl-D-glutamate + meso-2,6-diaminopimelate + ATP = UDP-N-acetyl-alpha-D-muramoyl-L-alanyl-gamma-D-glutamyl-meso-2,6-diaminopimelate + ADP + phosphate + H(+). The protein operates within cell wall biogenesis; peptidoglycan biosynthesis. Its function is as follows. Catalyzes the addition of meso-diaminopimelic acid to the nucleotide precursor UDP-N-acetylmuramoyl-L-alanyl-D-glutamate (UMAG) in the biosynthesis of bacterial cell-wall peptidoglycan. In Synechocystis sp. (strain ATCC 27184 / PCC 6803 / Kazusa), this protein is UDP-N-acetylmuramoyl-L-alanyl-D-glutamate--2,6-diaminopimelate ligase.